A 272-amino-acid polypeptide reads, in one-letter code: Transformer-2 sex-determining protein (272 aa).

Disordered stretches follow at residues 21–102 (KHKC…DHPQ) and 182–272 (ITQR…QSRY). A compositionally biased stretch (low complexity) spans 26–41 (HSSATSSPSSAASSES). Basic and acidic residues predominate over residues 87-102 (TSRDRQRMRQARDHPQ). The RRM domain occupies 105–183 (RCIGVFGLNT…RRIRVDYSIT (79 aa)). The linker stretch occupies residues 184–204 (QRAHTPTPGVYMGRPSRPLGR). Residues 205-218 (RSRERDYSTRDTSR) show a composition bias toward basic and acidic residues. Over residues 238–266 (RKYRSRHRYDRSRSRTRSYSRSRSPRKPV) the composition is skewed to basic residues.

This sequence belongs to the splicing factor SR family. In terms of processing, extensively phosphorylated on serine residues in the RS domain.

In terms of biological role, required for female sex determination in somatic cells and for spermatogenesis in male germ cells. Positive regulator of female-specific splicing and/or polyadenylation of doublesex (dsx) pre-mRNA. Splicing requires an enhancer complex, dsxRE (dsx repeat element: which contains six copies of a 13-nucleotide repeat and a purine-rich enhancer (PRE)). DsxRE is formed through cooperative interactions between tra, tra2 and the sr proteins, and these interactions require both the repeat sequences and PRE. PRE is required for specific binding of tra2 to the dsxRE. Protein-RNA and protein-protein interactions are involved in tra-2 dependent activation and repression of alternative splicing. This is Transformer-2 sex-determining protein (tra2) from Drosophila virilis (Fruit fly).